A 96-amino-acid polypeptide reads, in one-letter code: NADH-ubiquinone oxidoreductase chain 4L (96 aa).

Transmembrane regions (helical) follow at residues 1 to 21 (MPTT…SLQR), 27 to 47 (LLLT…LWAL), and 57 to 77 (APLI…SLMI).

It belongs to the complex I subunit 4L family.

The protein localises to the mitochondrion membrane. It carries out the reaction a ubiquinone + NADH + 5 H(+)(in) = a ubiquinol + NAD(+) + 4 H(+)(out). Functionally, core subunit of the mitochondrial membrane respiratory chain NADH dehydrogenase (Complex I) which catalyzes electron transfer from NADH through the respiratory chain, using ubiquinone as an electron acceptor. Part of the enzyme membrane arm which is embedded in the lipid bilayer and involved in proton translocation. This chain is NADH-ubiquinone oxidoreductase chain 4L (MT-ND4L), found in Petromyzon marinus (Sea lamprey).